A 670-amino-acid chain; its full sequence is Nitrate import ATP-binding protein NrtC (670 aa).

One can recognise an ABC transporter domain in the interval 5-239 (IEIDHVDRIF…RPRHRLEVVN (235 aa)). Position 42-49 (42-49 (GHSGCGKS)) interacts with ATP. The tract at residues 255–278 (NQQKRAKKVGAVSQFAEAMGGNGL) is linker. The interval 279–670 (EKINLDLGFI…LIDQIDQVNQ (392 aa)) is nrtA-like.

Belongs to the ABC transporter superfamily. Nitrate/nitrite/cyanate uptake transporter (NitT) (TC 3.A.1.16) family. As to quaternary structure, the complex is composed of two ATP-binding proteins (NrtC and NrtD), two transmembrane proteins (NrtB) and a solute-binding protein (NrtA).

The protein resides in the cell inner membrane. The catalysed reaction is nitrate(out) + ATP + H2O = nitrate(in) + ADP + phosphate + H(+). Its function is as follows. Part of the ABC transporter complex NrtABCD involved in nitrate uptake. The complex is probably also involved in nitrite transport. Probably responsible for energy coupling to the transport system. The chain is Nitrate import ATP-binding protein NrtC (nrtC) from Synechocystis sp. (strain ATCC 27184 / PCC 6803 / Kazusa).